A 528-amino-acid polypeptide reads, in one-letter code: GMP synthase [glutamine-hydrolyzing] (528 aa).

The Glutamine amidotransferase type-1 domain occupies 13 to 204; it reads AIVILDFGSQ…VYHICGCEPD (192 aa). Cysteine 90 serves as the catalytic Nucleophile. Residues histidine 178 and glutamate 180 contribute to the active site. Positions 205–403 constitute a GMPS ATP-PPase domain; the sequence is WTTSAFIDEA…LGLPEEIVRR (199 aa). 232 to 238 serves as a coordination point for ATP; it reads SGGVDSS.

In terms of assembly, homodimer.

The enzyme catalyses XMP + L-glutamine + ATP + H2O = GMP + L-glutamate + AMP + diphosphate + 2 H(+). It participates in purine metabolism; GMP biosynthesis; GMP from XMP (L-Gln route): step 1/1. In terms of biological role, catalyzes the synthesis of GMP from XMP. The polypeptide is GMP synthase [glutamine-hydrolyzing] (Parasynechococcus marenigrum (strain WH8102)).